The primary structure comprises 914 residues: Protein translocase subunit SecA (914 aa).

Residues Gln87, 105 to 109 (GEGKT), and Asp508 contribute to the ATP site. Zn(2+) is bound by residues Cys898, Cys900, Cys909, and His910.

Belongs to the SecA family. As to quaternary structure, monomer and homodimer. Part of the essential Sec protein translocation apparatus which comprises SecA, SecYEG and auxiliary proteins SecDF-YajC and YidC. Zn(2+) serves as cofactor.

Its subcellular location is the cell inner membrane. It is found in the cytoplasm. It catalyses the reaction ATP + H2O + cellular proteinSide 1 = ADP + phosphate + cellular proteinSide 2.. Functionally, part of the Sec protein translocase complex. Interacts with the SecYEG preprotein conducting channel. Has a central role in coupling the hydrolysis of ATP to the transfer of proteins into and across the cell membrane, serving both as a receptor for the preprotein-SecB complex and as an ATP-driven molecular motor driving the stepwise translocation of polypeptide chains across the membrane. The chain is Protein translocase subunit SecA from Xylella fastidiosa (strain 9a5c).